A 218-amino-acid polypeptide reads, in one-letter code: MIP18 family protein galla-1 (218 aa).

A disordered region spans residues 1–59; that stretch reads MLSYIKRKLSESDSGVSSVATVTSSCGGDSGRAGGTGSSESGTGSSSASISGRSQNADE. The span at 12–27 shows a compositional bias: low complexity; that stretch reads SDSGVSSVATVTSSCG. A Phosphoserine modification is found at S14. The span at 28–37 shows a compositional bias: gly residues; the sequence is GDSGRAGGTG. Residues 38 to 54 are compositionally biased toward low complexity; that stretch reads SSESGTGSSSASISGRS. S65 is modified (phosphoserine).

This sequence belongs to the MIP18 family. Component of the CGX complex composed of crb, galla (galla-1 or galla-2) and Xpd. Interacts with crb (via intracellular domain). Is not able to interact with Xpd in the absence of crb.

It is found in the apical cell membrane. The protein localises to the cytoplasm. Its subcellular location is the cytoskeleton. It localises to the spindle. Component of the crb-galla-Xpd (CGX) complex which is essential for proper mitotic chromosome segregation in early embryos. The CGX complex is also required for cell proliferation in developing wing disks. In the CGX complex, acts with crb to recruit Xpd thus forming the functional complex. The sequence is that of MIP18 family protein galla-1 from Drosophila melanogaster (Fruit fly).